A 380-amino-acid polypeptide reads, in one-letter code: 4-hydroxy-3-methylbut-2-en-1-yl diphosphate synthase (flavodoxin) (380 aa).

Residues cysteine 273, cysteine 276, cysteine 308, and glutamate 315 each coordinate [4Fe-4S] cluster.

This sequence belongs to the IspG family. Requires [4Fe-4S] cluster as cofactor.

The enzyme catalyses (2E)-4-hydroxy-3-methylbut-2-enyl diphosphate + oxidized [flavodoxin] + H2O + 2 H(+) = 2-C-methyl-D-erythritol 2,4-cyclic diphosphate + reduced [flavodoxin]. The protein operates within isoprenoid biosynthesis; isopentenyl diphosphate biosynthesis via DXP pathway; isopentenyl diphosphate from 1-deoxy-D-xylulose 5-phosphate: step 5/6. Its function is as follows. Converts 2C-methyl-D-erythritol 2,4-cyclodiphosphate (ME-2,4cPP) into 1-hydroxy-2-methyl-2-(E)-butenyl 4-diphosphate. In Leifsonia xyli subsp. xyli (strain CTCB07), this protein is 4-hydroxy-3-methylbut-2-en-1-yl diphosphate synthase (flavodoxin).